We begin with the raw amino-acid sequence, 311 residues long: Transcription initiation factor IIB (311 aa).

A TFIIB-type zinc finger spans residues 11-42 (KETKCPECGSTKLINDHERGEVVCGACGLVID). The Zn(2+) site is built by Cys15, Cys18, Cys34, and Cys37. 2 tandem repeats follow at residues 128-211 (SELD…TREL) and 222-303 (DYVP…ELTE).

Belongs to the TFIIB family.

Stabilizes TBP binding to an archaeal box-A promoter. Also responsible for recruiting RNA polymerase II to the pre-initiation complex (DNA-TBP-TFIIB). This is Transcription initiation factor IIB from Methanosphaera stadtmanae (strain ATCC 43021 / DSM 3091 / JCM 11832 / MCB-3).